Here is a 376-residue protein sequence, read N- to C-terminus: Glutamate 5-kinase (376 aa).

Lysine 15 contributes to the ATP binding site. Residues serine 55, aspartate 142, and asparagine 154 each coordinate substrate. Residues 174-175 (TD) and 216-222 (TGGMATK) each bind ATP. The PUA domain maps to 281–359 (AGKVLVDAGA…AEIEQLLGYR (79 aa)).

Belongs to the glutamate 5-kinase family.

Its subcellular location is the cytoplasm. The catalysed reaction is L-glutamate + ATP = L-glutamyl 5-phosphate + ADP. The protein operates within amino-acid biosynthesis; L-proline biosynthesis; L-glutamate 5-semialdehyde from L-glutamate: step 1/2. Functionally, catalyzes the transfer of a phosphate group to glutamate to form L-glutamate 5-phosphate. The chain is Glutamate 5-kinase from Trichlorobacter lovleyi (strain ATCC BAA-1151 / DSM 17278 / SZ) (Geobacter lovleyi).